The following is a 117-amino-acid chain: uncharacterized protein (117 aa).

The interval 16 to 56 is disordered; sequence FSQSSDGRSNGGGSSSGDSVSTTSDGLLTTGTSPNTSSTSL. Positions 31–56 are enriched in low complexity; it reads SGDSVSTTSDGLLTTGTSPNTSSTSL.

This is an uncharacterized protein from Saccharomyces cerevisiae (strain ATCC 204508 / S288c) (Baker's yeast).